We begin with the raw amino-acid sequence, 203 residues long: FMN-dependent NADH:quinone oxidoreductase (203 aa).

FMN-binding positions include serine 9 and 15-17 (SKS).

It belongs to the azoreductase type 1 family. Homodimer. Requires FMN as cofactor.

The enzyme catalyses 2 a quinone + NADH + H(+) = 2 a 1,4-benzosemiquinone + NAD(+). The catalysed reaction is N,N-dimethyl-1,4-phenylenediamine + anthranilate + 2 NAD(+) = 2-(4-dimethylaminophenyl)diazenylbenzoate + 2 NADH + 2 H(+). Its function is as follows. Quinone reductase that provides resistance to thiol-specific stress caused by electrophilic quinones. Also exhibits azoreductase activity. Catalyzes the reductive cleavage of the azo bond in aromatic azo compounds to the corresponding amines. This is FMN-dependent NADH:quinone oxidoreductase from Bordetella avium (strain 197N).